A 496-amino-acid chain; its full sequence is Probable cytosol aminopeptidase (496 aa).

Lys266 and Asp271 together coordinate Mn(2+). Lys278 is a catalytic residue. 3 residues coordinate Mn(2+): Asp289, Asp348, and Glu350. Arg352 is an active-site residue.

Belongs to the peptidase M17 family. Mn(2+) serves as cofactor.

It is found in the cytoplasm. The enzyme catalyses Release of an N-terminal amino acid, Xaa-|-Yaa-, in which Xaa is preferably Leu, but may be other amino acids including Pro although not Arg or Lys, and Yaa may be Pro. Amino acid amides and methyl esters are also readily hydrolyzed, but rates on arylamides are exceedingly low.. It carries out the reaction Release of an N-terminal amino acid, preferentially leucine, but not glutamic or aspartic acids.. Functionally, presumably involved in the processing and regular turnover of intracellular proteins. Catalyzes the removal of unsubstituted N-terminal amino acids from various peptides. The chain is Probable cytosol aminopeptidase from Pseudomonas fluorescens (strain Pf0-1).